We begin with the raw amino-acid sequence, 401 residues long: Putative phosphatidylinositol 4-phosphate 5-kinase 11 (401 aa).

One can recognise a PIPK domain in the interval 1–390 (MELRATVENR…RFQDFVSNIF (390 aa)). Positions 242–260 (SFKSNSTKSMKTASSSPDR) are enriched in polar residues. The interval 242–268 (SFKSNSTKSMKTASSSPDRSSVAMYSC) is disordered. The activation loop stretch occupies residues 350–371 (YGMKKRIEHCYKSIQYNSNSIS).

It catalyses the reaction a 1,2-diacyl-sn-glycero-3-phospho-(1D-myo-inositol 4-phosphate) + ATP = a 1,2-diacyl-sn-glycero-3-phospho-(1D-myo-inositol-4,5-bisphosphate) + ADP + H(+). This Arabidopsis thaliana (Mouse-ear cress) protein is Putative phosphatidylinositol 4-phosphate 5-kinase 11 (PIP5K11).